The following is a 97-amino-acid chain: Large ribosomal subunit protein bL28 (97 aa).

It belongs to the bacterial ribosomal protein bL28 family.

The sequence is that of Large ribosomal subunit protein bL28 from Rickettsia akari (strain Hartford).